A 427-amino-acid polypeptide reads, in one-letter code: Putative FBD-associated F-box protein At3g50710 (427 aa).

The F-box domain occupies 1–53; that stretch reads MDRISNLSDDLLLKIVSSLPTKDVVVTMLLSKRWKFLWMMVPKLRFDDEFELE. The FBD domain occupies 345 to 395; the sequence is HWEEPSSVPQCLLFHLNIFEWKYYNAGDEEKKVVAYILKNARQLKTATFSA.

In Arabidopsis thaliana (Mouse-ear cress), this protein is Putative FBD-associated F-box protein At3g50710.